A 437-amino-acid polypeptide reads, in one-letter code: Protein translocase subunit SecY (437 aa).

The next 10 helical transmembrane spans lie at Leu19–Val39, Leu69–Leu89, Val122–Phe142, Ile157–Leu177, Gly189–Ile209, Trp219–Val239, Gly275–Phe295, His318–Phe338, Gly378–Ala398, and Gln400–Val420.

This sequence belongs to the SecY/SEC61-alpha family. Component of the Sec protein translocase complex. Heterotrimer consisting of SecY, SecE and SecG subunits. The heterotrimers can form oligomers, although 1 heterotrimer is thought to be able to translocate proteins. Interacts with the ribosome. Interacts with SecDF, and other proteins may be involved. Interacts with SecA.

The protein resides in the cell membrane. In terms of biological role, the central subunit of the protein translocation channel SecYEG. Consists of two halves formed by TMs 1-5 and 6-10. These two domains form a lateral gate at the front which open onto the bilayer between TMs 2 and 7, and are clamped together by SecE at the back. The channel is closed by both a pore ring composed of hydrophobic SecY resides and a short helix (helix 2A) on the extracellular side of the membrane which forms a plug. The plug probably moves laterally to allow the channel to open. The ring and the pore may move independently. The protein is Protein translocase subunit SecY of Streptomyces coelicolor (strain ATCC BAA-471 / A3(2) / M145).